The primary structure comprises 208 residues: Uracil phosphoribosyltransferase (208 aa).

5-phospho-alpha-D-ribose 1-diphosphate-binding positions include Arg-78, Arg-103, and 130–138; that span reads DPMLATANS. Uracil-binding positions include Ile-193 and 198 to 200; that span reads GDA. Asp-199 serves as a coordination point for 5-phospho-alpha-D-ribose 1-diphosphate.

It belongs to the UPRTase family. The cofactor is Mg(2+).

The catalysed reaction is UMP + diphosphate = 5-phospho-alpha-D-ribose 1-diphosphate + uracil. The protein operates within pyrimidine metabolism; UMP biosynthesis via salvage pathway; UMP from uracil: step 1/1. With respect to regulation, allosterically activated by GTP. Functionally, catalyzes the conversion of uracil and 5-phospho-alpha-D-ribose 1-diphosphate (PRPP) to UMP and diphosphate. The sequence is that of Uracil phosphoribosyltransferase from Brucella melitensis biotype 2 (strain ATCC 23457).